The chain runs to 175 residues: ATP-dependent protease subunit HslV (175 aa).

Residue threonine 2 is part of the active site. Na(+)-binding residues include glycine 158, cysteine 161, and threonine 164.

The protein belongs to the peptidase T1B family. HslV subfamily. A double ring-shaped homohexamer of HslV is capped on each side by a ring-shaped HslU homohexamer. The assembly of the HslU/HslV complex is dependent on binding of ATP.

Its subcellular location is the cytoplasm. It catalyses the reaction ATP-dependent cleavage of peptide bonds with broad specificity.. Its activity is regulated as follows. Allosterically activated by HslU binding. Its function is as follows. Protease subunit of a proteasome-like degradation complex believed to be a general protein degrading machinery. The polypeptide is ATP-dependent protease subunit HslV (Histophilus somni (strain 129Pt) (Haemophilus somnus)).